The chain runs to 901 residues: Probable inorganic carbon transporter subunit DabA (901 aa).

4 residues coordinate Zn(2+): cysteine 424, aspartate 426, histidine 606, and cysteine 621.

This sequence belongs to the inorganic carbon transporter (TC 9.A.2) DabA family. In terms of assembly, forms a complex with DabB. Zn(2+) serves as cofactor.

Its subcellular location is the cell membrane. Functionally, part of an energy-coupled inorganic carbon pump. This Staphylococcus aureus (strain USA300) protein is Probable inorganic carbon transporter subunit DabA.